Here is a 951-residue protein sequence, read N- to C-terminus: MSKTNKSKSGSRSSRSRSASRSRSRSFSKSRSRSRSVSRSRKRRLSSRSRSRSYSPAHNRERNHPRVYQNRDFRGHNRGYRRPYYFRGRNRGFYPWGQYNRGGYGNYRSNWQNYRQAYSPRRGRSRSRSPKRRSPSPRSRSHSRNSDKSSSDRSRRSSSSRLSSNHSRVESSKRKSTKEKKSSSKDSRPSQAAGDNQGDEAKEQTFSGGTSQDIKGSESSKPWPDATTYGAGSASRASVSDLSPRERSPALKSPLQSVVVRRRSPRPSPVPKPSPPLSNASQMGSSMSGGAGYQSGAHQGQFDHGSGSLSPSKKSPVGKSPPATGSAYGSSQKEESAASGGAAYSKRYLEEQKTENGKDKEQKQTNADKEKLKEKGGFSDADVKMKSDPFAPKTDSEKPFRGSQSPKRYKLRDDFEKKMADFHKEELDEHDKDKSKGRKEPEFDDEPKFMSKVIAGASKNQEEEKSGKWESLHTGKEKQRKAEEMEDEPFTERSRKEERGGSKRSESGHRGFVPEKNFRVTAYKAVQEKSSSPPPRKTSESRDKLGSKGDFSSGKSSFSITREAQVNVRMDSFDEDLARPSGLLAQERKLCRDLVHSNKKEQEFRSIFQHIQSAQSQRSPSELFAQHIVTIVHHVKEHHFGSSGMTLHERFTKYLKRGNEQEAAKNKKSPEIHRRIDISPSTFRKHGLTHEELKSPREPGYKAEGKYKDDPVDLRLDIERRKKHKERDLKRGKSRESVDSRDSSHSRERSTEKTEKTHKGSKKQKKHRRARDRSRSSSSSSQSSHSYKAEEYPEEAEEREESTSGFDKSRLGTKDFVGPNERGGRARGTFQFRARGRGWGRGNYSGNNNNNSNNDFQKRSREEEWDPEYTPKSKKYYLHDDREGEGSDKWMGRGRGRGAFPRGRGRFMFRKSSTSPKWAHDKFSGEEGEIEDDESGTENREEKDSLQPSAE.

The segment covering 1 to 13 (MSKTNKSKSGSRS) has biased composition (low complexity). Disordered stretches follow at residues 1–94 (MSKT…RGFY), 117–558 (AYSP…KSSF), and 661–951 (QEAA…PSAE). The segment covering 14–51 (SRSRSASRSRSRSFSKSRSRSRSVSRSRKRRLSSRSRS) has biased composition (basic residues). Residues 58-75 (HNRERNHPRVYQNRDFRG) show a composition bias toward basic and acidic residues. Positions 82–94 (RPYYFRGRNRGFY) are enriched in low complexity. Residues 121–143 (RRGRSRSRSPKRRSPSPRSRSHS) show a composition bias toward basic residues. Residues 144-155 (RNSDKSSSDRSR) are compositionally biased toward basic and acidic residues. Low complexity predominate over residues 157-166 (SSSSRLSSNH). Over residues 167 to 188 (SRVESSKRKSTKEKKSSSKDSR) the composition is skewed to basic and acidic residues. The segment covering 204–220 (QTFSGGTSQDIKGSESS) has biased composition (polar residues). Residues 266–276 (RPSPVPKPSPP) are compositionally biased toward pro residues. 2 stretches are compositionally biased toward low complexity: residues 305–322 (GSGS…KSPP) and 337–346 (AASGGAAYSK). Composition is skewed to basic and acidic residues over residues 347–387 (RYLE…KMKS), 411–449 (LRDD…EPKF), 460–483 (NQEE…RKAE), 490–518 (FTER…EKNF), and 537–547 (KTSESRDKLGS). Over residues 548–558 (KGDFSSGKSSF) the composition is skewed to low complexity. 549-556 (GDFSSGKS) serves as a coordination point for ATP. 2 stretches are compositionally biased toward basic and acidic residues: residues 661 to 677 (QEAA…RRID) and 688 to 758 (LTHE…EKTH). Basic residues predominate over residues 759–772 (KGSKKQKKHRRARD). Composition is skewed to low complexity over residues 776–786 (SSSSSSQSSHS) and 844–854 (YSGNNNNNSNN). A compositionally biased stretch (basic and acidic residues) spans 877–891 (YLHDDREGEGSDKWM). The span at 926-936 (EEGEIEDDESG) shows a compositional bias: acidic residues.

The protein belongs to the BCLAF1/THRAP3 family. In terms of assembly, associated with the large multiprotein complex TRAP (Mediator complex-like).

Its subcellular location is the nucleus. Its function is as follows. Involved in pre-mRNA splicing. Involved in nuclear mRNA decay. Initially thought to play a role in transcriptional coactivation through its association with the TRAP complex; however, it is not regarded as a stable Mediator complex subunit. May play a role in the positive regulation of the circadian clock. In Xenopus laevis (African clawed frog), this protein is Thyroid hormone receptor-associated protein 3 (thrap3).